Consider the following 4351-residue polypeptide: Protocadherin Fat 2 (4351 aa).

An N-terminal signal peptide occupies residues 1–18 (MTLVLLGLAILLLHRAAC). Over 19 to 4050 (EKSLEETIPP…IKRGDWGQQE (4032 aa)) the chain is Extracellular. Cadherin domains are found at residues 34–148 (THSL…KPLF) and 149–256 (SPPS…PPAI). N-linked (GlcNAc...) asparagine glycosylation is found at Asn39, Asn210, Asn280, and Asn330. 31 consecutive Cadherin domains span residues 363-458 (EKAV…APVF), 459-564 (NRSS…QPMF), 565-669 (EEVN…VPVQ), 716-820 (DHFP…PPRF), 821-925 (PPGG…PPQC), 926-1032 (ITEH…SPHF), 1033-1142 (SSFV…RPVF), 1138-1242 (SRPV…PPMF), 1243-1346 (SHKL…SSIP), 1350-1448 (DESY…RPQF), 1449-1555 (LQDH…SPHF), 1556-1660 (TQLR…APVF), 1661-1758 (SKDE…PPAF), 1759-1872 (GKPT…PPRF), 1873-1968 (SEQI…SLQF), 1969-2070 (DQDV…IPEF), 2071-2171 (QHLP…NPLF), 2172-2272 (QSPY…PPTF), 2273-2379 (SQLV…PPKF), 2380-2481 (REPQ…SPEF), 2482-2585 (QQNV…APQF), 2586-2692 (KASG…LPKF), 2693-2799 (SEPL…RPVF), 2800-2908 (EADP…PPRF), 2909-3013 (ASED…SPQC), 3014-3115 (SQLL…APRF), 3116-3220 (FPSH…LPIF), 3221-3323 (LNAE…HPRF), 3324-3428 (THDL…PPRF), 3429-3533 (FQLN…PPST), and 3534-3631 (LPLE…VPQQ). Asn459, Asn568, Asn627, and Asn789 each carry an N-linked (GlcNAc...) asparagine glycan. Asn996 is a glycosylation site (N-linked (GlcNAc...) asparagine). Asn1175, Asn1276, and Asn1417 each carry an N-linked (GlcNAc...) asparagine glycan. Asn1899, Asn1998, Asn2007, Asn2102, Asn2165, Asn2183, Asn2325, Asn2368, Asn2387, Asn2430, Asn2470, Asn2547, and Asn2597 each carry an N-linked (GlcNAc...) asparagine glycan. Asn3127, Asn3278, and Asn3312 each carry an N-linked (GlcNAc...) asparagine glycan. 8 N-linked (GlcNAc...) asparagine glycosylation sites follow: Asn3432, Asn3603, Asn3770, Asn3774, Asn3815, Asn3842, Asn3875, and Asn3906. In terms of domain architecture, Laminin G-like spans 3775–3946 (GTTLRFSGQS…RLETWALSQC (172 aa)). 4 disulfide bridges follow: Cys3914-Cys3946, Cys3953-Cys3964, Cys3958-Cys3974, and Cys3976-Cys3985. 2 consecutive EGF-like domains span residues 3949–3986 (PGTACSQSPCLNGGSCSPALGSGYLCRCPPPFSGRNCE) and 3988–4024 (GRENCTSAPCQEGGTCVSSPEGTSCNCPHPYTGDRCE). Asn3991 carries N-linked (GlcNAc...) asparagine glycosylation. 3 disulfides stabilise this stretch: Cys3992–Cys4003, Cys3997–Cys4012, and Cys4014–Cys4023. The helical transmembrane segment at 4051–4071 (FLVITVALPLVIIATVGLLLY) threads the bilayer. Over 4072-4351 (CRRRKSHKPV…DYGSCEEVMF (280 aa)) the chain is Cytoplasmic. Positions 4316-4340 (VNGGPATGRSQPRAPPNYEGSDMVE) are disordered.

In terms of assembly, homodimer. As to expression, cerebellum-specific expression. Expressed in thin parallel fibers of cerebellar granule cells.

It localises to the cell membrane. It is found in the cell junction. The protein localises to the golgi apparatus. The protein resides in the trans-Golgi network. Its function is as follows. Involved in the regulation of cell migration. May be involved in mediating the organization of the parallel fibers of granule cells during cerebellar development. In Rattus norvegicus (Rat), this protein is Protocadherin Fat 2 (Fat2).